A 464-amino-acid polypeptide reads, in one-letter code: Maturase K (464 aa).

The protein belongs to the intron maturase 2 family. MatK subfamily.

The protein resides in the plastid. It localises to the chloroplast. Functionally, usually encoded in the trnK tRNA gene intron. Probably assists in splicing its own and other chloroplast group II introns. This is Maturase K from Castanea crenata (Japanese chestnut).